We begin with the raw amino-acid sequence, 374 residues long: Alanine racemase (374 aa).

Catalysis depends on lysine 35, which acts as the Proton acceptor; specific for D-alanine. Lysine 35 carries the N6-(pyridoxal phosphate)lysine modification. Substrate is bound at residue arginine 133. The Proton acceptor; specific for L-alanine role is filled by tyrosine 261. Methionine 315 contacts substrate.

It belongs to the alanine racemase family. Pyridoxal 5'-phosphate is required as a cofactor.

It catalyses the reaction L-alanine = D-alanine. Its pathway is amino-acid biosynthesis; D-alanine biosynthesis; D-alanine from L-alanine: step 1/1. In terms of biological role, catalyzes the interconversion of L-alanine and D-alanine. May also act on other amino acids. The polypeptide is Alanine racemase (alr) (Psychrobacter sp. (strain PRwf-1)).